Consider the following 209-residue polypeptide: Small ribosomal subunit protein uS4 (209 aa).

The S4 RNA-binding domain occupies 98-164 (RRLDNVVYRL…LPIKNAIELN (67 aa)).

Belongs to the universal ribosomal protein uS4 family. In terms of assembly, part of the 30S ribosomal subunit. Contacts protein S5. The interaction surface between S4 and S5 is involved in control of translational fidelity.

One of the primary rRNA binding proteins, it binds directly to 16S rRNA where it nucleates assembly of the body of the 30S subunit. In terms of biological role, with S5 and S12 plays an important role in translational accuracy. The chain is Small ribosomal subunit protein uS4 from Thermosipho melanesiensis (strain DSM 12029 / CIP 104789 / BI429).